The primary structure comprises 288 residues: Diaminopimelate epimerase (288 aa).

Substrate is bound by residues Asn-14 and Asn-67. Cys-76 functions as the Proton donor in the catalytic mechanism. Residues 77-78, Asn-166, Asn-199, and 217-218 contribute to the substrate site; these read GN and ER. Cys-226 (proton acceptor) is an active-site residue. 227–228 is a binding site for substrate; sequence GT.

It belongs to the diaminopimelate epimerase family. In terms of assembly, homodimer.

The protein localises to the cytoplasm. It carries out the reaction (2S,6S)-2,6-diaminopimelate = meso-2,6-diaminopimelate. Its pathway is amino-acid biosynthesis; L-lysine biosynthesis via DAP pathway; DL-2,6-diaminopimelate from LL-2,6-diaminopimelate: step 1/1. In terms of biological role, catalyzes the stereoinversion of LL-2,6-diaminopimelate (L,L-DAP) to meso-diaminopimelate (meso-DAP), a precursor of L-lysine and an essential component of the bacterial peptidoglycan. This Bacillus cereus (strain ATCC 10987 / NRS 248) protein is Diaminopimelate epimerase.